The sequence spans 103 residues: Integration host factor subunit alpha (103 aa).

A disordered region spans residues 50–72; it reads GNFNLRDKGERPGRNPKTGEEIP. The segment covering 54–69 has biased composition (basic and acidic residues); it reads LRDKGERPGRNPKTGE.

Belongs to the bacterial histone-like protein family. As to quaternary structure, heterodimer of an alpha and a beta chain.

This protein is one of the two subunits of integration host factor, a specific DNA-binding protein that functions in genetic recombination as well as in transcriptional and translational control. This is Integration host factor subunit alpha from Coxiella burnetii (strain CbuK_Q154) (Coxiella burnetii (strain Q154)).